The chain runs to 95 residues: Protein TusB (95 aa).

This sequence belongs to the DsrH/TusB family. In terms of assembly, heterohexamer, formed by a dimer of trimers. The hexameric TusBCD complex contains 2 copies each of TusB, TusC and TusD. The TusBCD complex interacts with TusE.

It localises to the cytoplasm. Part of a sulfur-relay system required for 2-thiolation of 5-methylaminomethyl-2-thiouridine (mnm(5)s(2)U) at tRNA wobble positions. The polypeptide is Protein TusB (Klebsiella pneumoniae (strain 342)).